Reading from the N-terminus, the 383-residue chain is MPSGCRCLHLVCLLCILAAPVKPVRADDCSSHCDLAHGCCAPDGSCRCDPGWEGLHCERCVRMPGCQHGTCHQPWQCICHSGWAGKFCDKDEHVCTTQSPCRNGGQCIYDGGGEYHCVCPPGFHGRDCERKEGPCEQAGSPCRNGGQCQDDQGFALNYTCRCLAGFVGAHCEVNVDDCLMRPCANGATCLDGINRFSCLCPEGFAGRFCTINLDDCASRPCQRGARCRDRVHDFDCLCPSGYGGKTCELVLPVPDPATTADIPPGPTLAVVVPATGPIPHSAGAGLLRISVKEVVRRQEAGLGKSSLVAVVVFGAVTATLVLSTVLLTLRAWRRGVCPPGPCCYPAPHYAPARQDQECQVSMLPAGLPLPPDLPPEPGKTTAL.

The N-terminal stretch at 1–26 (MPSGCRCLHLVCLLCILAAPVKPVRA) is a signal peptide. EGF-like domains are found at residues 27-58 (DDCS…LHCE), 62-89 (RMPG…KFCD), 91-129 (DEHV…RDCE), and 131-172 (KEGP…AHCE). At 27 to 306 (DDCSSHCDLA…RQEAGLGKSS (280 aa)) the chain is on the extracellular side. Intrachain disulfides connect Cys-29–Cys-40, Cys-33–Cys-46, Cys-48–Cys-57, Cys-66–Cys-71, Cys-79–Cys-88, Cys-95–Cys-107, Cys-101–Cys-117, Cys-119–Cys-128, Cys-135–Cys-148, Cys-142–Cys-160, Cys-162–Cys-171, Cys-178–Cys-189, Cys-183–Cys-198, Cys-200–Cys-209, Cys-216–Cys-227, Cys-221–Cys-236, and Cys-238–Cys-247. An N-linked (GlcNAc...) asparagine glycan is attached at Asn-157. One can recognise an EGF-like 5; calcium-binding domain in the interval 174–210 (NVDDCLMRPCANGATCLDGINRFSCLCPEGFAGRFCT). In terms of domain architecture, EGF-like 6; calcium-binding spans 212 to 248 (NLDDCASRPCQRGARCRDRVHDFDCLCPSGYGGKTCE). The chain crosses the membrane as a helical span at residues 307 to 327 (LVAVVVFGAVTATLVLSTVLL). Over 328–383 (TLRAWRRGVCPPGPCCYPAPHYAPARQDQECQVSMLPAGLPLPPDLPPEPGKTTAL) the chain is Cytoplasmic.

The protein localises to the membrane. Functionally, regulates adipogenesis. In Sus scrofa (Pig), this protein is Protein delta homolog 2 (DLK2).